Here is a 239-residue protein sequence, read N- to C-terminus: Flagellar L-ring protein (239 aa).

The first 16 residues, 1-16 (MKPVILATASALLLAA), serve as a signal peptide directing secretion. Cysteine 17 carries the N-palmitoyl cysteine lipid modification. Cysteine 17 is lipidated: S-diacylglycerol cysteine. Positions 120 to 138 (SGSTSGSASGNLGLTGDTS) are enriched in polar residues. The tract at residues 120-145 (SGSTSGSASGNLGLTGDTSTDGKGKI) is disordered.

It belongs to the FlgH family. The basal body constitutes a major portion of the flagellar organelle and consists of four rings (L,P,S, and M) mounted on a central rod.

It localises to the cell outer membrane. It is found in the bacterial flagellum basal body. Assembles around the rod to form the L-ring and probably protects the motor/basal body from shearing forces during rotation. This is Flagellar L-ring protein from Azorhizobium caulinodans (strain ATCC 43989 / DSM 5975 / JCM 20966 / LMG 6465 / NBRC 14845 / NCIMB 13405 / ORS 571).